We begin with the raw amino-acid sequence, 523 residues long: Light-independent protochlorophyllide reductase subunit B (523 aa).

Aspartate 36 serves as a coordination point for [4Fe-4S] cluster. The Proton donor role is filled by aspartate 290. Residue 425 to 426 (GL) coordinates substrate.

The protein belongs to the ChlB/BchB/BchZ family. As to quaternary structure, protochlorophyllide reductase is composed of three subunits; ChlL, ChlN and ChlB. Forms a heterotetramer of two ChlB and two ChlN subunits. The cofactor is [4Fe-4S] cluster.

It carries out the reaction chlorophyllide a + oxidized 2[4Fe-4S]-[ferredoxin] + 2 ADP + 2 phosphate = protochlorophyllide a + reduced 2[4Fe-4S]-[ferredoxin] + 2 ATP + 2 H2O. It participates in porphyrin-containing compound metabolism; chlorophyll biosynthesis (light-independent). In terms of biological role, component of the dark-operative protochlorophyllide reductase (DPOR) that uses Mg-ATP and reduced ferredoxin to reduce ring D of protochlorophyllide (Pchlide) to form chlorophyllide a (Chlide). This reaction is light-independent. The NB-protein (ChlN-ChlB) is the catalytic component of the complex. The protein is Light-independent protochlorophyllide reductase subunit B of Prochlorococcus marinus (strain MIT 9215).